Consider the following 206-residue polypeptide: MKTTHTSLPFAGHTLHFVEFDPANFCEQDLLWLPHYAQLQHAGRKRKTEHLAGRIAAVYALREYGYKCVPAIGELRQPVWPAEVYGSISHCGATALAVVSRQPIGVDIEEIFSAQTATELTDNIITPAEHERLADCGLAFSLALTLAFSAKESAFKASEIQTDAGFLDYQIISWNKQQVIIHRENEMFAVHWQIKEKIVITLCQHD.

Mg(2+)-binding residues include Asp-107, Glu-109, and Glu-152.

Belongs to the P-Pant transferase superfamily. EntD family. EntB, EntD, EntE, and EntF form a multienzyme complex called enterobactin synthase. It depends on Mg(2+) as a cofactor.

Its subcellular location is the membrane. The enzyme catalyses apo-[aryl-carrier protein] + CoA = holo-[aryl-carrier protein] + adenosine 3',5'-bisphosphate + H(+). The catalysed reaction is apo-[peptidyl-carrier protein] + CoA = holo-[peptidyl-carrier protein] + adenosine 3',5'-bisphosphate + H(+). Its pathway is siderophore biosynthesis; enterobactin biosynthesis. Involved in the biosynthesis of the siderophore enterobactin (enterochelin), which is a macrocyclic trimeric lactone of N-(2,3-dihydroxybenzoyl)-serine. The serine trilactone serves as a scaffolding for the three catechol functionalities that provide hexadentate coordination for the tightly ligated iron(2+) atoms. Plays an essential role in the assembly of the enterobactin by catalyzing the transfer of the 4'-phosphopantetheine (Ppant) moiety from coenzyme A to the apo-domains of both EntB (ArCP domain) and EntF (PCP domain) to yield their holo-forms which make them competent for the activation of 2,3-dihydroxybenzoate (DHB) and L-serine, respectively. In Escherichia coli O157:H7, this protein is Enterobactin synthase component D.